The chain runs to 594 residues: Putative diflavin flavoprotein A 4 (594 aa).

The segment at 57–250 (RRGTTSNSYL…LTLKMIAPGH (194 aa)) is zinc metallo-hydrolase. The Flavodoxin-like domain occupies 279–417 (VALIYASAYG…VCTTSGANFA (139 aa)). The tract at residues 445–594 (VGRIIGSIGV…IRHRKSGGQY (150 aa)) is flavodoxin-reductase-like.

This sequence in the N-terminal section; belongs to the zinc metallo-hydrolase group 3 family. The protein in the C-terminal section; belongs to the flavodoxin reductase family. Fe cation is required as a cofactor.

In terms of biological role, mediates electron transfer from NADH to oxygen, reducing it to water. This modular protein has 3 redox cofactors, in other organisms the same activity requires 2 or 3 proteins. In Synechocystis sp. (strain ATCC 27184 / PCC 6803 / Kazusa), this protein is Putative diflavin flavoprotein A 4 (dfa4).